The sequence spans 1253 residues: Pleckstrin homology-like domain family B member 2 (1253 aa).

Residues 1–12 (MEEHSYIQKELD) show a composition bias toward basic and acidic residues. Disordered regions lie at residues 1–43 (MEEH…PKKY), 60–159 (LTLS…KSHD), and 187–212 (DAGP…RKMS). Residues 29 to 43 (NDSQNMMESLSPKKY) show a composition bias toward polar residues. S71 and S73 each carry phosphoserine. Polar residues predominate over residues 74–96 (PLGTSVRSSPSLAKIQGSKQFSY). Positions 126–144 (ADFDHYTGRDSERALRLSE) are enriched in basic and acidic residues. 5 positions are modified to phosphoserine: S157, S204, S212, S242, and S245. The segment at 265–286 (NQLTPLSLPPRNSLGNSKRTKL) is disordered. 11 positions are modified to phosphoserine: S330, S334, S348, S351, S384, S387, S415, S420, S468, S489, and S501. Residue T504 is modified to Phosphothreonine. S513 is modified (phosphoserine). Residues 525–567 (LSQSSASFFTPRSTRNDELLSDLTRTPPPPSSTFPKASSESSY) are disordered. Phosphothreonine occurs at positions 550 and 574. Coiled coils occupy residues 584-696 (SQEL…LDNC) and 722-807 (FEDL…LCNL). T898 carries the post-translational modification Phosphothreonine. Residues 1032–1098 (IARIEEMERL…QKLIEKEVKI (67 aa)) are a coiled coil. Residues 1143–1246 (EKTCRGFLIK…WMDVIVTGAE (104 aa)) enclose the PH domain.

In terms of assembly, interacts with FLNC. Interacts with AMOTL2; interaction may facilitate PHLDB2 localization to the myotube podosome cortex that surrounds the core. Part of a cortical microtubule stabilization complex (CMSC) composed of KANK1, PPFIA1, PPFIBP1, ERC1/ELKS, PHLDB2/LL5beta, CLASPs, KIF21A and possibly additional interactors; within CMSCs KANK1 and PHLDB2/LL5beta appear to be the core components for targeting of microtubule-binding proteins KIF21A and CLASPs, whereas PPFIA1, PPFIBP1 and ERC1/ELKS serve as scaffolds for protein clustering.

Its subcellular location is the cytoplasm. It localises to the cell cortex. The protein resides in the membrane. The protein localises to the cell projection. It is found in the podosome. Seems to be involved in the assembly of the postsynaptic apparatus. May play a role in acetyl-choline receptor (AChR) aggregation in the postsynaptic membrane. This Homo sapiens (Human) protein is Pleckstrin homology-like domain family B member 2 (PHLDB2).